We begin with the raw amino-acid sequence, 188 residues long: Ion-translocating oxidoreductase complex subunit B (188 aa).

The tract at residues 1 to 23 is hydrophobic; that stretch reads MFTAIWVMVGLAIAIGLILGWSA. One can recognise a 4Fe-4S domain in the interval 29–88; it reads EGNPLAEKIDAILPQTQCGQCGFPGCRPYAEAIAKGEADINQCPPGGEEGVKKLAELLGV. [4Fe-4S] cluster-binding residues include cysteine 46, cysteine 49, cysteine 54, cysteine 71, cysteine 113, cysteine 116, cysteine 119, cysteine 123, cysteine 143, cysteine 146, cysteine 149, and cysteine 153. 2 4Fe-4S ferredoxin-type domains span residues 104 to 133 and 134 to 163; these read SVAF…GAAK and QMHT…MVPI.

Belongs to the 4Fe4S bacterial-type ferredoxin family. RnfB subfamily. In terms of assembly, the complex is composed of six subunits: RnfA, RnfB, RnfC, RnfD, RnfE and RnfG. [4Fe-4S] cluster is required as a cofactor.

Its subcellular location is the cell inner membrane. Part of a membrane-bound complex that couples electron transfer with translocation of ions across the membrane. The chain is Ion-translocating oxidoreductase complex subunit B from Thiobacillus denitrificans (strain ATCC 25259 / T1).